Here is a 527-residue protein sequence, read N- to C-terminus: Inosine-5'-monophosphate dehydrogenase (527 aa).

2 CBS domains span residues Phe121 to Val183 and Met184 to Ser240. NAD(+)-binding positions include Asp277–Ser279 and Gly327–Gly329. Residues Gly329 and Gly331 each coordinate K(+). Ser332 is an IMP binding site. Cys334 provides a ligand contact to K(+). Residue Cys334 is the Thioimidate intermediate of the active site. Residues Asp367–Gly369 and Gly390–Ser391 contribute to the IMP site. Arg440 acts as the Proton acceptor in catalysis. Gln452 contacts IMP. A disordered region spans residues Ala506 to Ser527. K(+) contacts are provided by Glu511 and Gly512. Positions His518–Ser527 are enriched in basic and acidic residues.

The protein belongs to the IMPDH/GMPR family. As to quaternary structure, homotetramer. K(+) serves as cofactor.

It is found in the cytoplasm. The enzyme catalyses IMP + NAD(+) + H2O = XMP + NADH + H(+). It participates in purine metabolism; XMP biosynthesis via de novo pathway; XMP from IMP: step 1/1. Mycophenolic acid (MPA) is a non-competitive inhibitor that prevents formation of the closed enzyme conformation by binding to the same site as the amobile flap. In contrast, mizoribine monophosphate (MZP) is a competitive inhibitor that induces the closed conformation. MPA is a potent inhibitor of mammalian IMPDHs but a poor inhibitor of the bacterial enzymes. MZP is a more potent inhibitor of bacterial IMPDH. Its function is as follows. Catalyzes the conversion of inosine 5'-phosphate (IMP) to xanthosine 5'-phosphate (XMP), the first committed and rate-limiting step in the de novo synthesis of guanine nucleotides, and therefore plays an important role in the regulation of cell growth. Part of the gene cluster that mediates the biosynthesis of mycophenolic acid (MPA), the first isolated antibiotic natural product in the world. Does not play a role in the biosynthesis of MPA, but is involved in self resistance to MPA, since MPA acts as an inhibitor of IMP dehydrogenases. The chain is Inosine-5'-monophosphate dehydrogenase from Penicillium brevicompactum.